Reading from the N-terminus, the 498-residue chain is Cytochrome P450 monooxygenase apdB (498 aa).

The chain crosses the membrane as a helical span at residues 20–40 (ASPQVFKLFVLILFVLLVLKI). Residue C457 participates in heme binding.

It belongs to the cytochrome P450 family. Heme is required as a cofactor.

It is found in the membrane. Its pathway is secondary metabolite biosynthesis. Functionally, cytochrome P450 monooxygenase; part of the gene cluster that mediates the biosynthesis of aspyridones. The polyketide-amino acid backbone preaspyridone A is first assembled by the PKS-NRPS hybrid apdA. The assembly of preaspyridone A is initiated by loading of malonyl-CoA onto apdA, followed by decarboxylation to yield the acetyl starter unit. The growing polyketide chain then elongates into a tetraketide. The adpA PKS module catalyzes three Claisen condensations, as well as beta-keto processing and methylation. Alpha-methylation step during polyketide synthesis is a prerequisite and a key checkpoint for chain transfer between PKS and NRPS modules. The downstream NRPS module contains the condensation (C), adenylation (A), and thiolation (T) domains and catalyzes the incorporation of tyrosine via the formation of the L-tyrosinyl-thioester and the amide linkage between L-tyrosinyl-thioester and the tetraketide. The bimodular assembly line is terminated with a reductase (R) domain that facilitates formation and release of the tetramic acid product. Because apdA lacks a designated enoylreductase (ER) domain, the required activity is provided the enoyl reductase apdC. ApdC appears to operate with different stereoselectivity in different PKS cycle. Combined with apdC, apdA is proposed to synthesize preaspyridone A via about 20 enzymatic steps. A number of oxidative steps performed successively by the cytochrome P450 monooxygenases apdE and apdB are required for the conversion of preaspyridone A to aspyridone A. The cytochrome P450 monooxygenase apdE is responsible for the oxidative dephenylation of preaspyridone A. Finally, the predicted FAD-dependent monooxygenase apdD and the acyl-CoA dehydrogenase apdG may be involved in the transformation of aspyridone A into aspyridone B. This Emericella nidulans (strain FGSC A4 / ATCC 38163 / CBS 112.46 / NRRL 194 / M139) (Aspergillus nidulans) protein is Cytochrome P450 monooxygenase apdB.